We begin with the raw amino-acid sequence, 418 residues long: Aminodeoxyfutalosine deaminase (418 aa).

The Zn(2+) site is built by H97 and H99. Substrate is bound by residues E173 and H211. Zn(2+) is bound at residue H238. The active-site Proton donor is E241. D352 is a binding site for Zn(2+).

This sequence belongs to the metallo-dependent hydrolases superfamily. Zn(2+) serves as cofactor.

It catalyses the reaction 6-amino-6-deoxyfutalosine + H2O + H(+) = futalosine + NH4(+). It participates in quinol/quinone metabolism; menaquinone biosynthesis. Its function is as follows. Catalyzes the deamination of aminodeoxyfutalosine (AFL) into futalosine (FL). To a lesser extent, can also deaminate 5'-deoxyadenosine, 5'-methylthioadenosine, 2'-deoxyadenosine, adenosine, 1-(6-amino-9H-purin-9-yl)-1-deoxy-N-ethyl-beta-D-ribofuranuronamide (NECA), and S-adenosylhomocysteine. The sequence is that of Aminodeoxyfutalosine deaminase from Deinococcus radiodurans (strain ATCC 13939 / DSM 20539 / JCM 16871 / CCUG 27074 / LMG 4051 / NBRC 15346 / NCIMB 9279 / VKM B-1422 / R1).